Reading from the N-terminus, the 630-residue chain is Golgi apyrase (630 aa).

The Lumenal portion of the chain corresponds to 1 to 500 (MLIENTNDRF…RKQSSSLSNK (500 aa)). Glu152 acts as the Proton acceptor in catalysis. The chain crosses the membrane as a helical span at residues 501 to 517 (GFLMWFAIICCIFYLIF). Residues 518-630 (HRSHIIRRRF…SKFKDSRLYD (113 aa)) are Cytoplasmic-facing. The disordered stretch occupies residues 586–606 (SSATMQREHEPQRTASQSANL).

This sequence belongs to the GDA1/CD39 NTPase family. As to quaternary structure, interacts with activator subunit VMA13 of vacuolar H(+)-ATPase. Interacts with CDC55; this interaction is disrupted by adenovirus E4orf4, which remains associated with both YND1 and CDC55. The cofactor is Ca(2+). Mg(2+) serves as cofactor. It depends on Mn(2+) as a cofactor.

It localises to the golgi apparatus. The protein localises to the membrane. The catalysed reaction is a ribonucleoside 5'-triphosphate + 2 H2O = a ribonucleoside 5'-phosphate + 2 phosphate + 2 H(+). It functions in the pathway protein modification; protein glycosylation. Its activity is regulated as follows. Activity is inhibited both by interaction with VMA13 and by V-ATPase acidification of the lumen. The activity of VMA13 is not required for YND1 inhibition. Catalyzes the hydrolysis of phosphoanhydride bonds of nucleoside tri- and di-phosphates. Has equal high activity toward ADP/ATP, GDP/GTP, and UDP/UTP and approximately 50% less toward CDP/CTP and thiamine pyrophosphate. Has no activity toward GMP. Required for Golgi glycosylation and cell wall integrity. Together with CDC55, required for adenovirus E4orf4 (early region 4 open reading frame 4) induced toxicity, the apyrase activity is not required for this function. Plays a role in sphingolipid synthesis. The protein is Golgi apyrase (YND1) of Saccharomyces cerevisiae (strain ATCC 204508 / S288c) (Baker's yeast).